The following is a 679-amino-acid chain: Glycine--tRNA ligase beta subunit (679 aa).

This sequence belongs to the class-II aminoacyl-tRNA synthetase family. As to quaternary structure, tetramer of two alpha and two beta subunits.

Its subcellular location is the cytoplasm. The enzyme catalyses tRNA(Gly) + glycine + ATP = glycyl-tRNA(Gly) + AMP + diphosphate. The polypeptide is Glycine--tRNA ligase beta subunit (Streptococcus agalactiae serotype V (strain ATCC BAA-611 / 2603 V/R)).